The sequence spans 648 residues: Macrolide export ATP-binding/permease protein MacB (648 aa).

The ABC transporter domain occupies 5-243 (LELCNVSRSY…QGVDAAVVNT (239 aa)). An ATP-binding site is contributed by 41–48 (GVSGSGKS). 5 helical membrane passes run 273-293 (LLTM…VVVG), 417-437 (ANVV…IGVA), 523-543 (LFLT…VMNI), 577-597 (VLVC…IAFM), and 611-631 (LTAL…FGWL).

It belongs to the ABC transporter superfamily. Macrolide exporter (TC 3.A.1.122) family. Homodimer. Part of the tripartite efflux system MacAB-TolC, which is composed of an inner membrane transporter, MacB, a periplasmic membrane fusion protein, MacA, and an outer membrane component, TolC. The complex forms a large protein conduit and can translocate molecules across both the inner and outer membranes. Interacts with MacA.

The protein localises to the cell inner membrane. In terms of biological role, part of the tripartite efflux system MacAB-TolC. MacB is a non-canonical ABC transporter that contains transmembrane domains (TMD), which form a pore in the inner membrane, and an ATP-binding domain (NBD), which is responsible for energy generation. Confers resistance against macrolides. In Salmonella choleraesuis (strain SC-B67), this protein is Macrolide export ATP-binding/permease protein MacB.